A 257-amino-acid chain; its full sequence is Acetylglutamate kinase (257 aa).

Substrate contacts are provided by residues 43–44 (GG), R65, and N157. Residues 180 to 185 (DVSGIL) and 208 to 210 (IIT) contribute to the ATP site.

Belongs to the acetylglutamate kinase family. ArgB subfamily. In terms of assembly, homodimer.

The protein localises to the cytoplasm. The enzyme catalyses N-acetyl-L-glutamate + ATP = N-acetyl-L-glutamyl 5-phosphate + ADP. Its pathway is amino-acid biosynthesis; L-arginine biosynthesis; N(2)-acetyl-L-ornithine from L-glutamate: step 2/4. Catalyzes the ATP-dependent phosphorylation of N-acetyl-L-glutamate. The chain is Acetylglutamate kinase from Serratia proteamaculans (strain 568).